Consider the following 416-residue polypeptide: Putative L-glutamine:3-amino-2,3-dideoxy-scyllo-inosose aminotransferase (416 aa).

Lys199 carries the N6-(pyridoxal phosphate)lysine modification.

It belongs to the DegT/DnrJ/EryC1 family. L-glutamine:2-deoxy-scyllo-inosose/scyllo-inosose aminotransferase subfamily. Pyridoxal 5'-phosphate is required as a cofactor.

The catalysed reaction is 3-amino-2,3-dideoxy-scyllo-inosose + L-glutamine = 2-deoxystreptamine + 2-oxoglutaramate. The protein operates within metabolic intermediate biosynthesis; 2-deoxystreptamine biosynthesis; 2-deoxystreptamine from D-glucose 6-phosphate: step 4/4. Its pathway is antibiotic biosynthesis; tobramycin biosynthesis. Its function is as follows. Catalyzes the transamination of 3-amino-2,3-dideoxy-scyllo-inosose (amino-DOI) into 2-deoxystreptamine (DOS). The polypeptide is Putative L-glutamine:3-amino-2,3-dideoxy-scyllo-inosose aminotransferase (tobS2) (Streptoalloteichus tenebrarius (strain ATCC 17920 / DSM 40477 / JCM 4838 / CBS 697.72 / NBRC 16177 / NCIMB 11028 / NRRL B-12390 / A12253. 1 / ISP 5477) (Streptomyces tenebrarius)).